Consider the following 214-residue polypeptide: Probable transaldolase (214 aa).

Lys-83 serves as the catalytic Schiff-base intermediate with substrate.

It belongs to the transaldolase family. Type 3B subfamily.

The protein localises to the cytoplasm. The enzyme catalyses D-sedoheptulose 7-phosphate + D-glyceraldehyde 3-phosphate = D-erythrose 4-phosphate + beta-D-fructose 6-phosphate. It functions in the pathway carbohydrate degradation; pentose phosphate pathway; D-glyceraldehyde 3-phosphate and beta-D-fructose 6-phosphate from D-ribose 5-phosphate and D-xylulose 5-phosphate (non-oxidative stage): step 2/3. Transaldolase is important for the balance of metabolites in the pentose-phosphate pathway. The chain is Probable transaldolase from Geotalea uraniireducens (strain Rf4) (Geobacter uraniireducens).